Here is a 495-residue protein sequence, read N- to C-terminus: Flagellin (495 aa).

It belongs to the bacterial flagellin family.

Its subcellular location is the secreted. The protein localises to the bacterial flagellum. Functionally, flagellin is the subunit protein which polymerizes to form the filaments of bacterial flagella. The polypeptide is Flagellin (fliC) (Salmonella paratyphi A (strain ATCC 9150 / SARB42)).